The sequence spans 157 residues: Transcription elongation factor GreA (157 aa).

A coiled-coil region spans residues 1 to 75 (MSKEIILTQE…VETLINRAKV (75 aa)).

It belongs to the GreA/GreB family.

Functionally, necessary for efficient RNA polymerase transcription elongation past template-encoded arresting sites. The arresting sites in DNA have the property of trapping a certain fraction of elongating RNA polymerases that pass through, resulting in locked ternary complexes. Cleavage of the nascent transcript by cleavage factors such as GreA or GreB allows the resumption of elongation from the new 3'terminus. GreA releases sequences of 2 to 3 nucleotides. This Mycoplasma mycoides subsp. mycoides SC (strain CCUG 32753 / NCTC 10114 / PG1) protein is Transcription elongation factor GreA.